Consider the following 496-residue polypeptide: Cytosol aminopeptidase (496 aa).

Positions 258 and 263 each coordinate Mn(2+). Lys270 is an active-site residue. Mn(2+)-binding residues include Asp281, Asp340, and Glu342. Residue Arg344 is part of the active site.

Belongs to the peptidase M17 family. Mn(2+) serves as cofactor.

Its subcellular location is the cytoplasm. The catalysed reaction is Release of an N-terminal amino acid, Xaa-|-Yaa-, in which Xaa is preferably Leu, but may be other amino acids including Pro although not Arg or Lys, and Yaa may be Pro. Amino acid amides and methyl esters are also readily hydrolyzed, but rates on arylamides are exceedingly low.. It carries out the reaction Release of an N-terminal amino acid, preferentially leucine, but not glutamic or aspartic acids.. Functionally, presumably involved in the processing and regular turnover of intracellular proteins. Catalyzes the removal of unsubstituted N-terminal amino acids from various peptides. This chain is Cytosol aminopeptidase (pepA), found in Helicobacter pylori (strain ATCC 700392 / 26695) (Campylobacter pylori).